We begin with the raw amino-acid sequence, 430 residues long: tRNA(Ile)-lysidine synthase (430 aa).

24–29 (SGGLDS) contacts ATP.

Belongs to the tRNA(Ile)-lysidine synthase family.

The protein resides in the cytoplasm. It carries out the reaction cytidine(34) in tRNA(Ile2) + L-lysine + ATP = lysidine(34) in tRNA(Ile2) + AMP + diphosphate + H(+). Ligates lysine onto the cytidine present at position 34 of the AUA codon-specific tRNA(Ile) that contains the anticodon CAU, in an ATP-dependent manner. Cytidine is converted to lysidine, thus changing the amino acid specificity of the tRNA from methionine to isoleucine. The protein is tRNA(Ile)-lysidine synthase of Haemophilus influenzae (strain ATCC 51907 / DSM 11121 / KW20 / Rd).